The chain runs to 485 residues: Glutamate--tRNA ligase (485 aa).

A 'HIGH' region motif is present at residues 10 to 20 (PSPTGHLHIGN). The short motif at 253–257 (KLSKR) is the 'KMSKS' region element. ATP is bound at residue Lys-256.

The protein belongs to the class-I aminoacyl-tRNA synthetase family. Glutamate--tRNA ligase type 1 subfamily. In terms of assembly, monomer.

It is found in the cytoplasm. It carries out the reaction tRNA(Glu) + L-glutamate + ATP = L-glutamyl-tRNA(Glu) + AMP + diphosphate. In terms of biological role, catalyzes the attachment of glutamate to tRNA(Glu) in a two-step reaction: glutamate is first activated by ATP to form Glu-AMP and then transferred to the acceptor end of tRNA(Glu). The sequence is that of Glutamate--tRNA ligase from Enterococcus faecalis (strain ATCC 700802 / V583).